We begin with the raw amino-acid sequence, 134 residues long: Translation initiation factor 2 subunit beta (134 aa).

This sequence belongs to the eIF-2-beta/eIF-5 family. In terms of assembly, heterotrimer composed of an alpha, a beta and a gamma chain.

In terms of biological role, eIF-2 functions in the early steps of protein synthesis by forming a ternary complex with GTP and initiator tRNA. The protein is Translation initiation factor 2 subunit beta of Pyrobaculum calidifontis (strain DSM 21063 / JCM 11548 / VA1).